The following is a 200-amino-acid chain: Probable molybdenum cofactor guanylyltransferase (200 aa).

GTP-binding positions include 9 to 11 (LAG), Lys21, Asp69, and Asp100. Position 100 (Asp100) interacts with Mg(2+).

Belongs to the MobA family. Mg(2+) serves as cofactor.

The protein resides in the cytoplasm. It catalyses the reaction Mo-molybdopterin + GTP + H(+) = Mo-molybdopterin guanine dinucleotide + diphosphate. Its function is as follows. Transfers a GMP moiety from GTP to Mo-molybdopterin (Mo-MPT) cofactor (Moco or molybdenum cofactor) to form Mo-molybdopterin guanine dinucleotide (Mo-MGD) cofactor. This chain is Probable molybdenum cofactor guanylyltransferase, found in Bacillus cereus (strain ATCC 10987 / NRS 248).